A 120-amino-acid polypeptide reads, in one-letter code: U13-lycotoxin-Ls1a (120 aa).

An N-terminal signal peptide occupies residues M1–C16. Positions F17–R54 are excised as a propeptide. Disulfide bonds link C56/C70, C63/C76, C69/C87, and C78/C85. The region spanning C56–C95 is the Agouti domain.

Belongs to the neurotoxin 05 (agouti) family. In terms of processing, contains 6 disulfide bonds. As to expression, expressed by the venom gland.

Its subcellular location is the secreted. This is U13-lycotoxin-Ls1a from Lycosa singoriensis (Wolf spider).